A 159-amino-acid polypeptide reads, in one-letter code: Protein-export protein SecB (159 aa).

This sequence belongs to the SecB family. Homotetramer, a dimer of dimers. One homotetramer interacts with 1 SecA dimer.

The protein localises to the cytoplasm. One of the proteins required for the normal export of preproteins out of the cell cytoplasm. It is a molecular chaperone that binds to a subset of precursor proteins, maintaining them in a translocation-competent state. It also specifically binds to its receptor SecA. The chain is Protein-export protein SecB from Burkholderia mallei (strain NCTC 10229).